Reading from the N-terminus, the 125-residue chain is Interferon-induced transmembrane protein 1 (125 aa).

Over 1-36 the chain is Cytoplasmic; the sequence is MHKEEHEVAVLGPPPSTILPRSTVINIHSETSVPDH. Position 16 is a phosphoserine (serine 16). The helical intramembrane region spans 37–57; sequence VVWSLFNTLFLNWCCLGFIAF. 3 S-palmitoyl cysteine lipidation sites follow: cysteine 50, cysteine 51, and cysteine 84. The Cytoplasmic portion of the chain corresponds to 58-86; the sequence is AYSVKSRDRKMVGDVTGAQAYASTAKCLN. The interaction with CAV1 stretch occupies residues 84 to 125; sequence CLNIWALILGILMTIGFILLLVFGSVTVYHIMLQIIQEKRGY. The helical transmembrane segment at 87–107 threads the bilayer; that stretch reads IWALILGILMTIGFILLLVFG. Topologically, residues 108 to 125 are extracellular; sequence SVTVYHIMLQIIQEKRGY.

It belongs to the CD225/Dispanin family. In terms of assembly, interacts with CD81. Part of a complex composed of CD19, CR2/CD21, CD81 and IFITM1/CD225 in the membrane of mature B-cells. Interacts with CAV1; this interaction enhances the ability of CAV1 in inhibiting ERK activation. In terms of processing, palmitoylation on membrane-proximal cysteines controls clustering in membrane compartments and antiviral activity. As to expression, bone (at protein level). Levels greatly elevated in colon cancer, cervical cancer, esophageal cancer and ovarian cancer. Expressed in glioma cell lines.

Its subcellular location is the cell membrane. It is found in the lysosome membrane. In terms of biological role, IFN-induced antiviral protein which inhibits the entry of viruses to the host cell cytoplasm, permitting endocytosis, but preventing subsequent viral fusion and release of viral contents into the cytosol. Active against multiple viruses, including influenza A virus, SARS coronaviruses (SARS-CoV and SARS-CoV-2), Marburg virus (MARV), Ebola virus (EBOV), Dengue virus (DNV), West Nile virus (WNV), human immunodeficiency virus type 1 (HIV-1) and hepatitis C virus (HCV). Can inhibit: influenza virus hemagglutinin protein-mediated viral entry, MARV and EBOV GP1,2-mediated viral entry and SARS-CoV and SARS-CoV-2 S protein-mediated viral entry. Also implicated in cell adhesion and control of cell growth and migration. Inhibits SARS-CoV-2 S protein-mediated syncytia formation. Plays a key role in the antiproliferative action of IFN-gamma either by inhibiting the ERK activation or by arresting cell growth in G1 phase in a p53-dependent manner. Acts as a positive regulator of osteoblast differentiation. In hepatocytes, IFITM proteins act in a coordinated manner to restrict HCV infection by targeting the endocytosed HCV virion for lysosomal degradation. IFITM2 and IFITM3 display anti-HCV activity that may complement the anti-HCV activity of IFITM1 by inhibiting the late stages of HCV entry, possibly in a coordinated manner by trapping the virion in the endosomal pathway and targeting it for degradation at the lysosome. This is Interferon-induced transmembrane protein 1 from Homo sapiens (Human).